Consider the following 191-residue polypeptide: MAPDQTSVKGQLIVLTGPSGVGKGTLVQLLLERQPHWFLSISATTRSPRAGEVDGQSYYFLTKEEFQTWIGEEKLLEWAEYAGNYYGTPRQPVEEQIAQGKTVLLEIEVLGARQIKQTFPSARRIFILPPSVEVLEERLRGRGSDSETAIAKRLAQAQQELQAAAEFDYQVVNDDLDQALHRLVKLIGEEE.

In terms of domain architecture, Guanylate kinase-like spans 10–188 (GQLIVLTGPS…ALHRLVKLIG (179 aa)). 17-24 (GPSGVGKG) provides a ligand contact to ATP.

The protein belongs to the guanylate kinase family.

Its subcellular location is the cytoplasm. It catalyses the reaction GMP + ATP = GDP + ADP. In terms of biological role, essential for recycling GMP and indirectly, cGMP. The sequence is that of Guanylate kinase (gmk) from Synechocystis sp. (strain ATCC 27184 / PCC 6803 / Kazusa).